The chain runs to 544 residues: Phosphomannomutase (544 aa).

The active-site Phosphoserine intermediate is the Ser-145. Residues Ser-145, Asp-297, Asp-299, and Asp-301 each coordinate Mg(2+).

The protein belongs to the phosphohexose mutase family. Mg(2+) serves as cofactor.

It catalyses the reaction alpha-D-mannose 1-phosphate = D-mannose 6-phosphate. In Mycoplasmoides pirum (Mycoplasma pirum), this protein is Phosphomannomutase (manB).